Here is a 164-residue protein sequence, read N- to C-terminus: Transcription elongation factor GreA (164 aa).

It belongs to the GreA/GreB family.

Functionally, necessary for efficient RNA polymerase transcription elongation past template-encoded arresting sites. The arresting sites in DNA have the property of trapping a certain fraction of elongating RNA polymerases that pass through, resulting in locked ternary complexes. Cleavage of the nascent transcript by cleavage factors such as GreA or GreB allows the resumption of elongation from the new 3'terminus. GreA releases sequences of 2 to 3 nucleotides. This Helicobacter acinonychis (strain Sheeba) protein is Transcription elongation factor GreA.